Here is a 144-residue protein sequence, read N- to C-terminus: RNA-binding protein 1 (144 aa).

The RRM domain maps to 11-84 (CKVYVGNLGS…TRIRVEMSSG (74 aa)). The interval 78-115 (RVEMSSGRSRDRRRGEGGSSGRSGSGRYRITPSARTTS) is disordered.

The protein belongs to the splicing factor SR family. As to quaternary structure, interacts with x16 (via Arg/Ser-rich region). In terms of processing, extensively phosphorylated on serine residues in the RS domain. Post-translationally, the tandem heptapeptide repeats in the C-terminal domain (CTD) can be highly phosphorylated. The phosphorylation activates Pol II. Phosphorylation occurs at residues 'Ser-2', 'Ser-5' and 'Ser-7' of the heptapeptide repeat and is mediated by P-TEFb. Dephosphorylated by the INTAC complex when transcripts are unfavorably configured for transcriptional elongation, leading to premature transcription termination: dephosphorylation is mediated by the mts/PP2A component of the INTAC complex. In terms of tissue distribution, ubiquitous.

The protein resides in the nucleus. Contributes to the activation of female-specific DSX splicing in vivo by recognizing the RBP1 target sequences within the purine-rich polypyrimidine tract of the female-specific 3' splice site. The protein is RNA-binding protein 1 (Rbp1) of Drosophila melanogaster (Fruit fly).